A 267-amino-acid polypeptide reads, in one-letter code: 4-hydroxy-tetrahydrodipicolinate reductase (267 aa).

NAD(+) is bound by residues 8–13 (GAAGRM) and aspartate 34. Arginine 35 contributes to the NADP(+) binding site. NAD(+) contacts are provided by residues 98-100 (GTT) and 122-125 (AANF). Catalysis depends on histidine 155, which acts as the Proton donor/acceptor. A (S)-2,3,4,5-tetrahydrodipicolinate-binding site is contributed by histidine 156. Lysine 159 acts as the Proton donor in catalysis. (S)-2,3,4,5-tetrahydrodipicolinate is bound at residue 165–166 (GT).

This sequence belongs to the DapB family.

The protein localises to the cytoplasm. The enzyme catalyses (S)-2,3,4,5-tetrahydrodipicolinate + NAD(+) + H2O = (2S,4S)-4-hydroxy-2,3,4,5-tetrahydrodipicolinate + NADH + H(+). It catalyses the reaction (S)-2,3,4,5-tetrahydrodipicolinate + NADP(+) + H2O = (2S,4S)-4-hydroxy-2,3,4,5-tetrahydrodipicolinate + NADPH + H(+). It functions in the pathway amino-acid biosynthesis; L-lysine biosynthesis via DAP pathway; (S)-tetrahydrodipicolinate from L-aspartate: step 4/4. Its function is as follows. Catalyzes the conversion of 4-hydroxy-tetrahydrodipicolinate (HTPA) to tetrahydrodipicolinate. The polypeptide is 4-hydroxy-tetrahydrodipicolinate reductase (Pseudomonas putida (strain ATCC 700007 / DSM 6899 / JCM 31910 / BCRC 17059 / LMG 24140 / F1)).